Reading from the N-terminus, the 1483-residue chain is Tyrosine-protein kinase BAZ1B (1483 aa).

The WAC domain maps to 20-126 (EPLFTIPHTQ…GEECDFEVGK (107 aa)). A disordered region spans residues 145–212 (EEATEKKSDG…TSLKKGERKW (68 aa)). Basic and acidic residues-rich tracts occupy residues 148-165 (TEKKSDGACDSPSSDKEN) and 172-195 (DHQKKETVVKEDEGRRESINDRAR). 3 positions are modified to phosphoserine: S152, S158, and S161. Residues 207–213 (KGERKWA) carry the C motif motif. T266 is modified (phosphothreonine). Positions 302–333 (NPSTKRKNTGSPDRKPSKKSKTDNSSLSSPLN) are disordered. Residues S330, S345, S347, S349, S361, and S374 each carry the phosphoserine modification. 2 disordered regions span residues 379–432 (HTNF…KTPK) and 446–470 (GTQKMTRAPRNSGGTPRTSSKPHKH). Composition is skewed to basic residues over residues 384–395 (IPKKGPPAKKPG) and 423–432 (SPKKGLKTPK). Residues 533 to 586 (KRWASMSEEQRKEYLKKKREELKKKLKEKAKERREKEMLERLEKQKRYEDQELT) adopt a coiled-coil conformation. The DDT domain maps to 604–668 (NTLFGDVAMV…LQTLLQDEIA (65 aa)). A phosphoserine mark is found at S699, S705, S708, and S716. Residues 768-814 (TRQQMSAELWKERLAVLKEENDKKRAEKQKRKEMEAKNKENGKVENG) are a coiled coil. Positions 788-810 (NDKKRAEKQKRKEMEAKNKENGK) are enriched in basic and acidic residues. The interval 788–817 (NDKKRAEKQKRKEMEAKNKENGKVENGLGK) is disordered. A Glycyl lysine isopeptide (Lys-Gly) (interchain with G-Cter in SUMO1); alternate cross-link involves residue K826. Residue K826 forms a Glycyl lysine isopeptide (Lys-Gly) (interchain with G-Cter in SUMO2); alternate linkage. Residues 850-893 (IQAKKEREIQEREMKVKLERQAEEERIRKHKAAAEKAFQEGIAK) adopt a coiled-coil conformation. A Glycyl lysine isopeptide (Lys-Gly) (interchain with G-Cter in SUMO2) cross-link involves residue K853. S947 bears the Phosphoserine mark. Residues K1043, K1089, and K1107 each participate in a glycyl lysine isopeptide (Lys-Gly) (interchain with G-Cter in SUMO2) cross-link. Residues 1184–1234 (NARCKVCRKKGEDDKLILCDECNKAFHLFCLRPALYEVPDGEWQCPACQPA) form a PHD-type zinc finger. The disordered stretch occupies residues 1237–1326 (RRNSRGRNYT…PKAPPVDDAE (90 aa)). Positions 1245–1283 (YTEESASEDSEDDESDEEEEEEEEEEEEEDYEVAGLRLR) form a coiled coil. Residues 1249 to 1276 (SASEDSEDDESDEEEEEEEEEEEEEDYE) show a composition bias toward acidic residues. Basic residues-rich tracts occupy residues 1282-1292 (LRPRKTIRGKH) and 1301-1316 (SGRRPGKKPHSTRRSQ). At S1315 the chain carries Phosphoserine. The residue at position 1335 (K1335) is an N6-acetyllysine. A Bromo domain is found at 1339–1443 (RRQSLELQKC…QCLVALLHKH (105 aa)). 2 positions are modified to phosphoserine: S1342 and S1468. Positions 1455–1483 (KKFPDRLAEDEGDSEPEAVGQSRGRRQKK) are disordered.

It belongs to the WAL family. BAZ1B subfamily. As to quaternary structure, component of the WICH-1 ISWI chromatin remodeling complex, at least composed of SMARCA1 and BAZ1B/WSTF, which regulates the spacing of histone octamers on the DNA template to facilitate access to DNA. Within the WICH-1 ISWI chromatin remodeling complex interacts with SMARCA1; the interaction is direct. Component of the WICH-5 ISWI chromatin remodeling complex (also called the WICH complex), at least composed of SMARCA5/SNF2H and BAZ1B/WSTF, which regulates the spacing of histone octamers on the DNA template to facilitate access to DNA. Within the WICH-5 ISWI chromatin remodeling complex interacts with SMARCA5/SNF2H; the interaction is direct. Component of the B-WICH chromatin remodeling complex, at least composed of SMARCA5/SNF2H, BAZ1B/WSTF, SF3B1, DEK, MYO1C, ERCC6, MYBBP1A and DDX21. Within the B-WICH chromatin remodeling complex, interacts with SMARCA5/SNF2H, DDX21, DEK, MYBBP1A, SF3B1, ERCC6 and MYO1C. Interacts with PCNA; the interaction is direct and is required for BAZ1B/WSTF binding to replication foci during S phase. Interacts with CDT1. The cofactor is Mn(2+). As to expression, ubiquitously expressed with high levels of expression in heart, brain, placenta, skeletal muscle and ovary.

Its subcellular location is the nucleus. It carries out the reaction L-tyrosyl-[protein] + ATP = O-phospho-L-tyrosyl-[protein] + ADP + H(+). Atypical tyrosine-protein kinase that plays a central role in chromatin remodeling and acts as a transcription regulator. Involved in DNA damage response by phosphorylating 'Tyr-142' of histone H2AX (H2AXY142ph). H2AXY142ph plays a central role in DNA repair and acts as a mark that distinguishes between apoptotic and repair responses to genotoxic stress. Regulatory subunit of the ATP-dependent WICH-1 and WICH-5 ISWI chromatin remodeling complexes, which form ordered nucleosome arrays on chromatin and facilitate access to DNA during DNA-templated processes such as DNA replication, transcription, and repair. Both complexes regulate the spacing of nucleosomes along the chromatin and have the ability to slide mononucleosomes to the center of a DNA template. The WICH-1 ISWI chromatin remodeling complex has a lower ATP hydrolysis rate than the WICH-5 ISWI chromatin remodeling complex. The WICH-5 ISWI chromatin-remodeling complex regulates the transcription of various genes, has a role in RNA polymerase I transcription. Within the B-WICH complex has a role in RNA polymerase III transcription. Mediates the recruitment of the WICH-5 ISWI chromatin remodeling complex to replication foci during DNA replication. The polypeptide is Tyrosine-protein kinase BAZ1B (BAZ1B) (Homo sapiens (Human)).